We begin with the raw amino-acid sequence, 121 residues long: Large ribosomal subunit protein uL18 (121 aa).

It belongs to the universal ribosomal protein uL18 family. In terms of assembly, part of the 50S ribosomal subunit; part of the 5S rRNA/L5/L18/L25 subcomplex. Contacts the 5S and 23S rRNAs.

In terms of biological role, this is one of the proteins that bind and probably mediate the attachment of the 5S RNA into the large ribosomal subunit, where it forms part of the central protuberance. In Streptococcus thermophilus (strain CNRZ 1066), this protein is Large ribosomal subunit protein uL18.